The sequence spans 285 residues: Acetylglutamate kinase (285 aa).

Substrate contacts are provided by residues 55–56 (GG), Arg77, and Asn171.

Belongs to the acetylglutamate kinase family. ArgB subfamily.

It is found in the cytoplasm. The enzyme catalyses N-acetyl-L-glutamate + ATP = N-acetyl-L-glutamyl 5-phosphate + ADP. It functions in the pathway amino-acid biosynthesis; L-arginine biosynthesis; N(2)-acetyl-L-ornithine from L-glutamate: step 2/4. Catalyzes the ATP-dependent phosphorylation of N-acetyl-L-glutamate. The polypeptide is Acetylglutamate kinase (Chlorobaculum tepidum (strain ATCC 49652 / DSM 12025 / NBRC 103806 / TLS) (Chlorobium tepidum)).